Reading from the N-terminus, the 105-residue chain is Met repressor (105 aa).

It belongs to the MetJ family. As to quaternary structure, homodimer.

It is found in the cytoplasm. This regulatory protein, when combined with SAM (S-adenosylmethionine) represses the expression of the methionine regulon and of enzymes involved in SAM synthesis. This chain is Met repressor, found in Citrobacter koseri (strain ATCC BAA-895 / CDC 4225-83 / SGSC4696).